The sequence spans 492 residues: Target of Myb1 membrane trafficking protein (492 aa).

Met-1 bears the N-acetylmethionine mark. At Ser-11 the chain carries Phosphoserine. In terms of domain architecture, VHS spans 20–152; that stretch reads ATDGSLQSED…DLRRKGLEFP (133 aa). The KRKK motif lies at 48–56; that stretch reads KDAFRAVKK. Ser-160 is subject to Phosphoserine. Position 164 is a phosphothreonine (Thr-164). Positions 167-195 are enriched in polar residues; sequence RTVFNSETPSRQNSVSSNTSQRGDLSQHA. The interval 167–215 is disordered; the sequence is RTVFNSETPSRQNSVSSNTSQRGDLSQHATPLPTPAVLPGDSPITPTPE. Residues Ser-176, Ser-180, and Ser-208 each carry the phosphoserine modification. The region spanning 215–303 is the GAT domain; it reads EQIGKLRSEL…VFLRHERFER (89 aa). Residues 321-326 form a clathrin box region; sequence DLIDMG. Residues Ser-355 and Ser-376 each carry the phosphoserine modification. Lys-385 is covalently cross-linked (Glycyl lysine isopeptide (Lys-Gly) (interchain with G-Cter in SUMO2)). An interaction with MYO6 region spans residues 392-463; sequence TDGLAGALDA…ADRLPNLASP (72 aa). A disordered region spans residues 450 to 492; the sequence is RAKAADRLPNLASPSAEGPPRPSPGTAPRRKTQEKDDDMLFAL. Ser-462 bears the Phosphoserine mark.

This sequence belongs to the TOM1 family. As to quaternary structure, found in a complex with TOLLIP; interacts (via GAT domain) with TOLLIP (via N-terminus); the interactions leads to TOM1-recruitment to endosomes and inhibition of TOLLIP binding to PtdIns(3)P. Interacts (via GAT domain and the C-terminal part of the VHS domain) with UBC/ubiquitin. Interacts (via clathrin box and C-terminus) with clathrin heavy chain. Interacts with MYO6. Interacts with TAX1BP1; CALCOCO2/NDP52 and OPTN; the interaction is indirect and is mediated by MYO6, which acts as a bridge between TOM1 and the three autophagy receptors. Interacts (via C-terminus) with ZFYVE16 (via C-terminus); interaction is required to target TOM1 and clathrin to endosomes. Interacts with LRBA. Post-translationally, monoubiquitinated. Ubiquitous. In adult brain, it is highly expressed at the mesencephalic level, in the hippocampal formation and medial lemniscus. In cerebellum, it is highly expressed in Purkinje cells and granular layers.

It localises to the cytoplasm. The protein localises to the endosome membrane. The protein resides in the early endosome membrane. In terms of biological role, adapter protein that plays a role in the intracellular membrane trafficking of ubiquitinated proteins, thereby participating in autophagy, ubiquitination-dependent signaling and receptor recycling pathways. Acts as a MYO6/Myosin VI adapter protein that targets MYO6 to endocytic structures. Together with MYO6, required for autophagosomal delivery of endocytic cargo, the maturation of autophagosomes and their fusion with lysosomes. MYO6 links TOM1 with autophagy receptors, such as TAX1BP1; CALCOCO2/NDP52 and OPTN. Binds to polyubiquitinated proteins via its GAT domain. In a complex with TOLLIP, recruits ubiquitin-conjugated proteins onto early endosomes. The Tom1-Tollip complex may regulate endosomal trafficking by linking polyubiquitinated proteins to clathrin. Mediates clathrin recruitment to early endosomes by ZFYVE16. Modulates binding of TOLLIP to phosphatidylinositol 3-phosphate (PtdIns(3)P) via binding competition; the association with TOLLIP may favor the release of TOLLIP from endosomal membranes, allowing TOLLIP to commit to cargo trafficking. Acts as a phosphatidylinositol 5-phosphate (PtdIns(5)P) effector by binding to PtdIns(5)P, thereby regulating endosomal maturation. PtdIns(5)P-dependent recruitment to signaling endosomes may block endosomal maturation. Also inhibits Toll-like receptor (TLR) signaling and participates in immune receptor recycling. The protein is Target of Myb1 membrane trafficking protein of Mus musculus (Mouse).